A 132-amino-acid polypeptide reads, in one-letter code: Flagellar basal body rod protein FlgB (132 aa).

This sequence belongs to the flagella basal body rod proteins family. In terms of assembly, the basal body constitutes a major portion of the flagellar organelle and consists of a number of rings mounted on a central rod. In Gram-negative bacteria, at least four rings, L, P, S and M are present, whereas Gram-positive bacteria lack the L and P rings. The rod consists of about 26 subunits of FlgG in the distal portion, and FlgB, FlgC and FlgF build up the proximal portion of the rod with about 6 subunits each. Rod assembly occurs by export via the flagellum-specific pathway of its constituent proteins and by their incorporation into the rod structure in the probable order of FlgB, FlgC, FlgF and FlgG. Another protein, FliE, also assembles onto the stable rod structure.

It is found in the bacterial flagellum basal body. Functionally, structural component of flagellum, the bacterial motility apparatus. Part of the rod structure of flagellar basal body. The polypeptide is Flagellar basal body rod protein FlgB (Aeromonas hydrophila).